An 89-amino-acid chain; its full sequence is Phosphocarrier protein HPr (89 aa).

The region spanning 1–89 (MERTVTVVPE…DILSTPEAKQ (89 aa)) is the HPr domain. The Pros-phosphohistidine intermediate role is filled by His-14. Position 47 is a phosphoserine; by HPrK/P (Ser-47).

The protein belongs to the HPr family.

It is found in the cytoplasm. With respect to regulation, phosphorylation on Ser-47 inhibits the phosphoryl transfer from enzyme I to HPr. In terms of biological role, general (non sugar-specific) component of the phosphoenolpyruvate-dependent sugar phosphotransferase system (sugar PTS). This major carbohydrate active-transport system catalyzes the phosphorylation of incoming sugar substrates concomitantly with their translocation across the cell membrane. The phosphoryl group from phosphoenolpyruvate (PEP) is transferred to the phosphoryl carrier protein HPr by enzyme I. Phospho-HPr then transfers it to the PTS EIIA domain. Is involved in fructose transport. This chain is Phosphocarrier protein HPr (ptsH1), found in Haloferax volcanii (strain ATCC 29605 / DSM 3757 / JCM 8879 / NBRC 14742 / NCIMB 2012 / VKM B-1768 / DS2) (Halobacterium volcanii).